Consider the following 150-residue polypeptide: Ribosome maturation factor RimP (150 aa).

The protein belongs to the RimP family.

It localises to the cytoplasm. Required for maturation of 30S ribosomal subunits. The polypeptide is Ribosome maturation factor RimP (Hahella chejuensis (strain KCTC 2396)).